A 481-amino-acid polypeptide reads, in one-letter code: Autolysin (481 aa).

Residues 7–142 (KNEFIERLKT…LQDDNMLMIS (136 aa)) form the Peptidase C51 domain. The 126-residue stretch at 198 to 323 (SNPKGIVIHN…NEFTSTSCPH (126 aa)) folds into the N-acetylmuramoyl-L-alanine amidase domain. The SH3b domain maps to 398–466 (EESARFTNGN…YLPIRTWNGS (69 aa)).

Belongs to the N-acetylmuramoyl-L-alanine amidase 2 family.

The protein localises to the secreted. It carries out the reaction Hydrolyzes the link between N-acetylmuramoyl residues and L-amino acid residues in certain cell-wall glycopeptides.. Autolysins are involved in some important biological processes such as cell separation, cell-wall turnover, competence for genetic transformation, formation of the flagella and sporulation. Autolysin strictly depends on the presence of choline-containing cell walls for activity. The sequence is that of Autolysin (lytA) from Staphylococcus aureus.